An 813-amino-acid polypeptide reads, in one-letter code: LPS-assembly protein LptD (813 aa).

The N-terminal stretch at 1-22 (MRRALRLLPLPLSIAICLPAMA) is a signal peptide.

Belongs to the LptD family. As to quaternary structure, component of the lipopolysaccharide transport and assembly complex. Interacts with LptE and LptA.

The protein resides in the cell outer membrane. Together with LptE, is involved in the assembly of lipopolysaccharide (LPS) at the surface of the outer membrane. The protein is LPS-assembly protein LptD of Xanthomonas oryzae pv. oryzae (strain KACC10331 / KXO85).